We begin with the raw amino-acid sequence, 354 residues long: MRVTDFSFELPESLIAHYPQPERSRCRLLSLEGPTGALTHGTFTDLLDKLNPGDLLVFNNTRVIPARLFGRKASGGKIEVLVERMLDDKRILAHIRASKAPKPGTELLLGDDESIHATMTARHGALFEVEFNDPRPVLDILNAIGHMPLPPYIDRPDEDADRELYQTVYSEKPGAVAAPTAGLHFDEPLLAALREKGIEMAFVTLHVGAGTFQPVRVDTIEDHIMHSEYAEVPQEVVDAVLAAKARGNRVIAVGTTSVRSLESAAQAAKSDLIEPFFGDTQIFIYPGYQYKVIDALITNFHLPESTLIMLVSAFAGYQHTMNAYKTAVEQKYRFFSYGDAMFITYNPQAIFERP.

Belongs to the QueA family. As to quaternary structure, monomer.

The protein localises to the cytoplasm. It catalyses the reaction 7-aminomethyl-7-carbaguanosine(34) in tRNA + S-adenosyl-L-methionine = epoxyqueuosine(34) in tRNA + adenine + L-methionine + 2 H(+). It functions in the pathway tRNA modification; tRNA-queuosine biosynthesis. Its function is as follows. Transfers and isomerizes the ribose moiety from AdoMet to the 7-aminomethyl group of 7-deazaguanine (preQ1-tRNA) to give epoxyqueuosine (oQ-tRNA). The sequence is that of S-adenosylmethionine:tRNA ribosyltransferase-isomerase from Salmonella schwarzengrund (strain CVM19633).